We begin with the raw amino-acid sequence, 386 residues long: Protein phosphatase methylesterase 1 (386 aa).

The tract at residues 20 to 48 is disordered; sequence ILEKLKGGQEPNSNEEGSDSIGDLPSLKN. Catalysis depends on residues S194, D222, and H348.

It belongs to the AB hydrolase superfamily.

The enzyme catalyses [phosphatase 2A protein]-C-terminal L-leucine methyl ester + H2O = [phosphatase 2A protein]-C-terminal L-leucine + methanol + H(+). In terms of biological role, demethylates proteins that have been reversibly carboxymethylated. Demethylates the phosphatase PP2A catalytic subunit. The protein is Protein phosphatase methylesterase 1 (PPE1) of Candida glabrata (strain ATCC 2001 / BCRC 20586 / JCM 3761 / NBRC 0622 / NRRL Y-65 / CBS 138) (Yeast).